Here is a 275-residue protein sequence, read N- to C-terminus: Trans-aconitate 2-methyltransferase (275 aa).

The protein belongs to the methyltransferase superfamily. Tam family.

The protein localises to the cytoplasm. It catalyses the reaction trans-aconitate + S-adenosyl-L-methionine = (E)-3-(methoxycarbonyl)pent-2-enedioate + S-adenosyl-L-homocysteine. Functionally, catalyzes the S-adenosylmethionine monomethyl esterification of trans-aconitate. The polypeptide is Trans-aconitate 2-methyltransferase (Pseudomonas aeruginosa (strain ATCC 15692 / DSM 22644 / CIP 104116 / JCM 14847 / LMG 12228 / 1C / PRS 101 / PAO1)).